The chain runs to 574 residues: MIRQFVSHRGIPCYRLAVRRVELTEPFHHPSPWPLGRKNWSTSDEAKSKRAAMRKGGAPPPEHEDWELTVGIEIHAQLDTDAKLFSSASAALDDVPNSNIALFDIALPGSQPLFQPSTLIPAIRAAIALNCDVQRVSRFDRKHYFYQDQPAGYQITQYYEPYAKNGSIWLGAHDGIAKEDGEGVQIGIKQIQMEQDTAKSQELPSSTYLLDFNRVSRPLIEIITLPQIHSATTAAACVRKIQAILQSVGAVTTGMEMGGLRADVNVSVRKRSEAAGDHQYDGVAGLGQRTEIKNLSSFKAVEYAIIAERDRQIAVLKAGGTIQGETRGWTLGSTETRKLRGKEGEVDYRYMPDPDLGPVIIGDDVISDLRRNIPGLPDELLQMLVQDPKYGLSTVDAKTLIELDDGQRLEYYQDAVEILTTLQPDLSADFSAGKVVGNWVLHELGGLLTKSSAHWDSQRVPAQSLAEIINLLSRKNITSSSAKSLLAMAFDGDKRSISQIVEDKNLLFQSLSRHEYLALAEEVMRQNPKMVSEIREKAQLGKMGWLVGQIKRIGDPNRVEAQKAEEILRELILK.

A mitochondrion-targeting transit peptide spans 1-12; sequence MIRQFVSHRGIP. The disordered stretch occupies residues 34–62; sequence PLGRKNWSTSDEAKSKRAAMRKGGAPPPE.

Belongs to the GatB/GatE family. GatB subfamily. As to quaternary structure, subunit of the heterotrimeric GatCAB amidotransferase (AdT) complex, composed of A, B and C subunits.

Its subcellular location is the mitochondrion. The enzyme catalyses L-glutamyl-tRNA(Gln) + L-glutamine + ATP + H2O = L-glutaminyl-tRNA(Gln) + L-glutamate + ADP + phosphate + H(+). In terms of biological role, allows the formation of correctly charged Gln-tRNA(Gln) through the transamidation of misacylated Glu-tRNA(Gln) in the mitochondria. The reaction takes place in the presence of glutamine and ATP through an activated gamma-phospho-Glu-tRNA(Gln). This Ajellomyces capsulatus (strain H143) (Darling's disease fungus) protein is Glutamyl-tRNA(Gln) amidotransferase subunit B, mitochondrial.